The chain runs to 575 residues: Sodium/hydrogen exchanger 8 (575 aa).

Transmembrane regions (helical) follow at residues 54 to 74, 78 to 98, 117 to 137, 150 to 170, 185 to 205, 255 to 275, 305 to 325, 348 to 368, 373 to 393, 411 to 431, and 445 to 465; these read MTIF…HLLI, LHFL…GAVI, PNMF…YSLH, LFAV…IYFL, FAFG…IFNA, LGYF…TGLI, GLAE…GIVM, VAFL…FSFP, ISFV…NIFP, MFIM…SLHL, and TTII…MPLI. A Phosphothreonine modification is found at Thr-504. Phosphoserine is present on residues Ser-565 and Ser-567.

Belongs to the monovalent cation:proton antiporter 1 (CPA1) transporter (TC 2.A.36) family. As to expression, intestine and kidneys.

Its subcellular location is the golgi apparatus membrane. It is found in the golgi apparatus. It localises to the trans-Golgi network membrane. The protein resides in the endosome. The protein localises to the multivesicular body membrane. Its subcellular location is the apical cell membrane. It is found in the cytoplasmic vesicle. It localises to the secretory vesicle. The protein resides in the acrosome. The catalysed reaction is Na(+)(in) + H(+)(out) = Na(+)(out) + H(+)(in). Expression and activity are regulated by acid media by increasing the rate of trafficking to the apical membrane. Inhibited by HOE694 and S3226. In terms of biological role, na(+)/H(+) antiporter. Mediates the electoneutral exchange of intracellular H(+) ions for extracellular Na(+) in 1:1 stoichiometry. Acts as an Na(+)/H(+) exchanger in the trans-Golgi. Contributes to the regulation of pH regulation of Golgi apparatus, and consequently, in protein trafficking and endosomal morphology. In germ cells, plays a crucial role in acrosome biogenesis and sperm development, probably by playing a role in the fusion of the Golgi-derived vesicles that form the acrosomal cap. Can also be active at the cell surface of specialized cells. In the small intestine, at the cell membrane, plays a major physiological role in transepithelial absorption of Na(+) and regulates intracellular pH homeostasis of intestinal epithelial cells. Acts as an important regulator of mucosal integrity in the intestine and in the stomach, could mediate the pH fluctuation necessary for mucin exocytosis or assist membrane trafficking of other proteins. Plays a role in photoreceptor survival and in the maintenance of intracellular pH homeostasis in retinal pigment epithelium (RPE cells). This Rattus norvegicus (Rat) protein is Sodium/hydrogen exchanger 8 (Slc9a8).